The primary structure comprises 116 residues: Putative BPES syndrome breakpoint region protein (116 aa).

As to expression, seems to be expressed only in testis.

This is Putative BPES syndrome breakpoint region protein (BPESC1) from Homo sapiens (Human).